A 500-amino-acid chain; its full sequence is Probable malate:quinone oxidoreductase (500 aa).

Belongs to the MQO family. FAD serves as cofactor.

The enzyme catalyses (S)-malate + a quinone = a quinol + oxaloacetate. It participates in carbohydrate metabolism; tricarboxylic acid cycle; oxaloacetate from (S)-malate (quinone route): step 1/1. The protein is Probable malate:quinone oxidoreductase of Bacillus cereus (strain G9842).